Reading from the N-terminus, the 661-residue chain is PAN2-PAN3 deadenylation complex subunit pan3 (661 aa).

Disordered stretches follow at residues 1-29 (MASV…NAKD) and 53-131 (DPHK…RQDA). The segment at 26-55 (NAKDTLCRNVTIYGRCRYEDKGCAFNHDPH) adopts a C3H1-type zinc-finger fold. A PABPC-interacting motif-2 (PAM-2) motif is present at residues 63 to 83 (NASKKRFNVDSPSFTPSLLPS). Over residues 77 to 104 (TPSLLPSNGSSPTSSSSSLKKSSTISPK) the composition is skewed to low complexity. Polar residues predominate over residues 115-126 (TAASRSNTSTPG). The tract at residues 263–524 (QTLPNTQLPA…NIDILINGIS (262 aa)) is pseudokinase domain. Residues Arg-315, 364-371 (DYHPLSKT), and 424-425 (SK) contribute to the ATP site. Residues 525–563 (SQLMSTFDSALHLDDQLTSDLGRELENGRLVRLLTKLNF) adopt a coiled-coil conformation. The knob domain stretch occupies residues 564 to 661 (INERPEHEHD…ALLRPSRRPH (98 aa)).

This sequence belongs to the protein kinase superfamily. PAN3 family. Homodimer. Forms a heterotrimer with a catalytic subunit pan2 to form the poly(a)-nuclease (PAN) deadenylation complex. Interacts (via PAM-2 motif) with poly(A)-binding protein pab1 (via PABC domain), conferring substrate specificity of the enzyme complex.

The protein resides in the cytoplasm. Regulatory subunit of the poly(A)-nuclease (PAN) deadenylation complex, one of two cytoplasmic mRNA deadenylases involved in mRNA turnover. PAN specifically shortens poly(A) tails of RNA and the activity is stimulated by poly(A)-binding protein pab1. PAN deadenylation is followed by rapid degradation of the shortened mRNA tails by the CCR4-NOT complex. Deadenylated mRNAs are then degraded by two alternative mechanisms, namely exosome-mediated 3'-5' exonucleolytic degradation, or deadenylation-dependent mRNA decaping and subsequent 5'-3' exonucleolytic degradation by XRN1. May also be involved in post-transcriptional maturation of mRNA poly(A) tails. pan3 acts as a positive regulator for PAN activity, recruiting the catalytic subunit pan2 to mRNA via its interaction with RNA and with pab1. The sequence is that of PAN2-PAN3 deadenylation complex subunit pan3 from Emericella nidulans (strain FGSC A4 / ATCC 38163 / CBS 112.46 / NRRL 194 / M139) (Aspergillus nidulans).